The primary structure comprises 192 residues: MAPEPKLRPTGLPSQEQVKELLDGEFARAGYEIENVVIDGGARPPRITVVVDGDRPLDLDTVASLSRSASEQLDRVDESGPGVTADAATYVLEVTSPGVDRPLTTEKHYRRARGRKVELTLSDGSQLTGRIGALTADGESVSLVVREGARANFSVRELPLEGIVKAVVQVEFSPPSQRELELTGQPREEAGA.

This sequence belongs to the RimP family.

The protein localises to the cytoplasm. In terms of biological role, required for maturation of 30S ribosomal subunits. The polypeptide is Ribosome maturation factor RimP (Mycobacterium sp. (strain JLS)).